The sequence spans 124 residues: Small ribosomal subunit protein uS12 (124 aa).

The segment at 1–25 is disordered; sequence MATINQLVRKPRQATTYKSASPALD. The residue at position 89 (Asp89) is a 3-methylthioaspartic acid.

This sequence belongs to the universal ribosomal protein uS12 family. In terms of assembly, part of the 30S ribosomal subunit. Contacts proteins S8 and S17. May interact with IF1 in the 30S initiation complex.

With S4 and S5 plays an important role in translational accuracy. Functionally, interacts with and stabilizes bases of the 16S rRNA that are involved in tRNA selection in the A site and with the mRNA backbone. Located at the interface of the 30S and 50S subunits, it traverses the body of the 30S subunit contacting proteins on the other side and probably holding the rRNA structure together. The combined cluster of proteins S8, S12 and S17 appears to hold together the shoulder and platform of the 30S subunit. In Stenotrophomonas maltophilia (strain R551-3), this protein is Small ribosomal subunit protein uS12.